We begin with the raw amino-acid sequence, 168 residues long: MTVAVYPGSFDPITKGHMDIVERAAQIFHEVIVAVVINPNKKPLFTMDERVEMIRMAVSHISNVRVESFSGLLVDFTRKQGARAIVRGLRAVSDFEVEFQMALMNKRLYPEVETVFMATHTDYAFLSSSMVKEVASFGGDVSDYLPPAVLARMAEKYGDTVRGKAPVR.

A substrate-binding site is contributed by S9. ATP-binding positions include 9 to 10 and H17; that span reads SF. Substrate-binding residues include K41, L73, and R87. Residues 88-90, E98, and 123-129 contribute to the ATP site; these read GLR and YAFLSSS.

The protein belongs to the bacterial CoaD family. In terms of assembly, homohexamer. It depends on Mg(2+) as a cofactor.

The protein localises to the cytoplasm. The enzyme catalyses (R)-4'-phosphopantetheine + ATP + H(+) = 3'-dephospho-CoA + diphosphate. It functions in the pathway cofactor biosynthesis; coenzyme A biosynthesis; CoA from (R)-pantothenate: step 4/5. In terms of biological role, reversibly transfers an adenylyl group from ATP to 4'-phosphopantetheine, yielding dephospho-CoA (dPCoA) and pyrophosphate. This is Phosphopantetheine adenylyltransferase from Heliobacterium modesticaldum (strain ATCC 51547 / Ice1).